Consider the following 415-residue polypeptide: Mulatexin (415 aa).

The first 21 residues, 1–21 (MKFRTLLIIFSLVFLLEIVSA), serve as a signal peptide directing secretion. Positions 23-66 (EPQCGRDAGGALCHGNLCCSHWGFCGTTAIYCDVDQGCQSQCWS) constitute a Chitin-binding type-1 1 domain. 4 disulfide bridges follow: cysteine 26–cysteine 41, cysteine 35–cysteine 47, cysteine 40–cysteine 54, and cysteine 60–cysteine 64. A disordered region spans residues 65–127 (WSSPPPPSPP…PGGPERPDHR (63 aa)). Over residues 67 to 121 (SPPPPSPPPPPPSPPPPSPPPPSPPPPSPPPPSPPPPSPPPPSPPPPSPPPPGGP) the composition is skewed to pro residues. The Chitin-binding type-1 2 domain maps to 125–167 (DHRCGRALGNPPCNPGRCCSIHNWCGSTAAYCRGSSCQYQCWN). Disulfide bonds link cysteine 128–cysteine 143, cysteine 137–cysteine 149, cysteine 142–cysteine 156, and cysteine 161–cysteine 165. The N-linked (GlcNAc...) asparagine glycan is linked to asparagine 264.

Post-translationally, glycosylated.

Its subcellular location is the secreted. Functionally, chitin-binding protein which slows larval growth when consumed by the lepidopteran species S.ricini and M.brassica, but not when consumed by the mulberry specialist B.mori. Lacks chitinase activity. The sequence is that of Mulatexin from Morus alba (White mulberry).